The chain runs to 196 residues: Ribonuclease H (196 aa).

Positions 58–196 constitute an RNase H type-1 domain; it reads LAKEEIIWES…GEIKADYGRK (139 aa). 4 residues coordinate Mg(2+): Asp71, Glu109, Asp132, and Asp192.

This sequence belongs to the RNase H family. Mn(2+) serves as cofactor. Mg(2+) is required as a cofactor.

It is found in the cytoplasm. The catalysed reaction is Endonucleolytic cleavage to 5'-phosphomonoester.. Its function is as follows. Endonuclease that specifically degrades the RNA of RNA-DNA hybrids. The sequence is that of Ribonuclease H (rnhA) from Halalkalibacterium halodurans (strain ATCC BAA-125 / DSM 18197 / FERM 7344 / JCM 9153 / C-125) (Bacillus halodurans).